We begin with the raw amino-acid sequence, 272 residues long: ATP phosphoribosyltransferase regulatory subunit (272 aa).

The protein belongs to the class-II aminoacyl-tRNA synthetase family. HisZ subfamily. As to quaternary structure, heteromultimer composed of HisG and HisZ subunits.

It is found in the cytoplasm. It participates in amino-acid biosynthesis; L-histidine biosynthesis; L-histidine from 5-phospho-alpha-D-ribose 1-diphosphate: step 1/9. Functionally, required for the first step of histidine biosynthesis. May allow the feedback regulation of ATP phosphoribosyltransferase activity by histidine. This Staphylococcus aureus (strain Mu3 / ATCC 700698) protein is ATP phosphoribosyltransferase regulatory subunit.